The chain runs to 477 residues: Epoxyalcohol synthase CYP5164B1 (477 aa).

Cysteine 421 contacts heme.

Belongs to the cytochrome P450 family. Requires heme as cofactor.

It carries out the reaction (9S)-hydroperoxy-(10E,12Z)-octadecadienoate = (11S)-hydroxy-(9S,10S)-epoxy-(12Z)-octadecenoate. The catalysed reaction is (13S)-hydroperoxy-(9Z,11E)-octadecadienoate = 11-hydroxy-12,13-epoxy-(9Z)-octadecenoate. Its pathway is lipid metabolism; oxylipin biosynthesis. In terms of biological role, cytochrome P450 epoxyalcohol synthase involved in the metabolism of oxylipins 'ectocarpins' natural products, such as hybridalactone, ecklonilactones and derivatives. Isomerizes the hydroperoxides into epoxyalcohols via epoxyallylic radical. Can use linoleic acid 9-hydroperoxide ((9S,10E,12Z)-9-hydroperoxy-10,12-octadecadienoic, 9-HPOD) as preferred substrate to produce (9S,10S,11S,12Z)-9,10-epoxy-11-hydroxy-12-octadecenoic acid and, to a lower extent, active with linoleate 13-hydroperoxide ((9Z,11E,13S)-13-hydroperoxy-9,11-octadecadienoic, 13-HPOD) to produce 11-hydroxy-12,13-epoxy-9-octadecenoic acid. No activity toward alpha-linolenic acid 9- and 13-hydroperoxides, and toward eicosapentaenoic acid 15-hydroperoxide. The chain is Epoxyalcohol synthase CYP5164B1 from Ectocarpus siliculosus (Brown alga).